A 347-amino-acid polypeptide reads, in one-letter code: Ribosomal RNA small subunit methyltransferase C (347 aa).

It belongs to the methyltransferase superfamily. RsmC family. Monomer.

Its subcellular location is the cytoplasm. It carries out the reaction guanosine(1207) in 16S rRNA + S-adenosyl-L-methionine = N(2)-methylguanosine(1207) in 16S rRNA + S-adenosyl-L-homocysteine + H(+). Functionally, specifically methylates the guanine in position 1207 of 16S rRNA in the 30S particle. The sequence is that of Ribosomal RNA small subunit methyltransferase C from Yersinia pseudotuberculosis serotype O:1b (strain IP 31758).